Here is a 229-residue protein sequence, read N- to C-terminus: 7-cyano-7-deazaguanine synthase (229 aa).

14–24 lines the ATP pocket; that stretch reads LSGGQDSTTCL. Zn(2+)-binding residues include Cys192, Cys200, Cys203, and Cys206.

Belongs to the QueC family. The cofactor is Zn(2+).

The enzyme catalyses 7-carboxy-7-deazaguanine + NH4(+) + ATP = 7-cyano-7-deazaguanine + ADP + phosphate + H2O + H(+). Its pathway is purine metabolism; 7-cyano-7-deazaguanine biosynthesis. In terms of biological role, catalyzes the ATP-dependent conversion of 7-carboxy-7-deazaguanine (CDG) to 7-cyano-7-deazaguanine (preQ(0)). The polypeptide is 7-cyano-7-deazaguanine synthase (Laribacter hongkongensis (strain HLHK9)).